We begin with the raw amino-acid sequence, 317 residues long: Phosphopantothenate--cysteine ligase 1 (317 aa).

It belongs to the PPC synthetase family. Homodimer.

It catalyses the reaction (R)-4'-phosphopantothenate + L-cysteine + ATP = N-[(R)-4-phosphopantothenoyl]-L-cysteine + AMP + diphosphate + H(+). The protein operates within cofactor biosynthesis; coenzyme A biosynthesis; CoA from (R)-pantothenate: step 2/5. Catalyzes the first step in the biosynthesis of coenzyme A from vitamin B5/pantothenate, where cysteine is conjugated to 4'-phosphopantothenate to form 4-phosphopantothenoylcysteine. The catalytic activity is not CTP- but ATP-dependent. The polypeptide is Phosphopantothenate--cysteine ligase 1 (PPCS1) (Arabidopsis thaliana (Mouse-ear cress)).